We begin with the raw amino-acid sequence, 347 residues long: Protein RecA (347 aa).

Residue 80-87 participates in ATP binding; it reads GPESSGKT.

Belongs to the RecA family.

Its subcellular location is the cytoplasm. Functionally, can catalyze the hydrolysis of ATP in the presence of single-stranded DNA, the ATP-dependent uptake of single-stranded DNA by duplex DNA, and the ATP-dependent hybridization of homologous single-stranded DNAs. It interacts with LexA causing its activation and leading to its autocatalytic cleavage. The polypeptide is Protein RecA (Chlorobaculum parvum (strain DSM 263 / NCIMB 8327) (Chlorobium vibrioforme subsp. thiosulfatophilum)).